The primary structure comprises 417 residues: Gamma-glutamyl phosphate reductase (417 aa).

The protein belongs to the gamma-glutamyl phosphate reductase family.

It is found in the cytoplasm. It carries out the reaction L-glutamate 5-semialdehyde + phosphate + NADP(+) = L-glutamyl 5-phosphate + NADPH + H(+). Its pathway is amino-acid biosynthesis; L-proline biosynthesis; L-glutamate 5-semialdehyde from L-glutamate: step 2/2. Catalyzes the NADPH-dependent reduction of L-glutamate 5-phosphate into L-glutamate 5-semialdehyde and phosphate. The product spontaneously undergoes cyclization to form 1-pyrroline-5-carboxylate. This is Gamma-glutamyl phosphate reductase from Desulfitobacterium hafniense (strain Y51).